We begin with the raw amino-acid sequence, 467 residues long: Dihydroorotase (467 aa).

2 residues coordinate Zn(2+): His60 and His62. Residues 62–64 (HFR) and Asn94 contribute to the substrate site. Zn(2+) is bound by residues Glu146, His180, His234, and Asp313. Residue Asp313 is part of the active site. His317 is a substrate binding site. Positions 439 to 467 (KPGRGEFLEGSGKRSEEDEEENSEETGSD) are disordered. Residues 441–454 (GRGEFLEGSGKRSE) show a composition bias toward basic and acidic residues. A compositionally biased stretch (acidic residues) spans 455 to 467 (EDEEENSEETGSD).

The protein belongs to the metallo-dependent hydrolases superfamily. DHOase family. Class I DHOase subfamily. It depends on Zn(2+) as a cofactor.

The catalysed reaction is (S)-dihydroorotate + H2O = N-carbamoyl-L-aspartate + H(+). Its pathway is pyrimidine metabolism; UMP biosynthesis via de novo pathway; (S)-dihydroorotate from bicarbonate: step 3/3. Its function is as follows. Catalyzes the reversible cyclization of carbamoyl aspartate to dihydroorotate. This chain is Dihydroorotase, found in Methanosarcina acetivorans (strain ATCC 35395 / DSM 2834 / JCM 12185 / C2A).